Reading from the N-terminus, the 159-residue chain is Small ribosomal subunit protein uS15 (159 aa).

Residues 1 to 16 (MNKRKEKGKSHSKRPV) are compositionally biased toward basic residues. Positions 1-22 (MNKRKEKGKSHSKRPVRNTPPR) are disordered.

Belongs to the universal ribosomal protein uS15 family. As to quaternary structure, part of the 30S ribosomal subunit.

In Ignicoccus hospitalis (strain KIN4/I / DSM 18386 / JCM 14125), this protein is Small ribosomal subunit protein uS15.